A 324-amino-acid polypeptide reads, in one-letter code: Ribosomal RNA small subunit methyltransferase H (324 aa).

S-adenosyl-L-methionine-binding positions include Ala-40 to His-42, Asp-60, Leu-94, Asp-108, and His-115. Residues Glu-301–Gly-324 form a disordered region. A compositionally biased stretch (basic and acidic residues) spans Arg-315–Gly-324.

The protein belongs to the methyltransferase superfamily. RsmH family.

Its subcellular location is the cytoplasm. It catalyses the reaction cytidine(1402) in 16S rRNA + S-adenosyl-L-methionine = N(4)-methylcytidine(1402) in 16S rRNA + S-adenosyl-L-homocysteine + H(+). Functionally, specifically methylates the N4 position of cytidine in position 1402 (C1402) of 16S rRNA. The sequence is that of Ribosomal RNA small subunit methyltransferase H from Maridesulfovibrio salexigens (strain ATCC 14822 / DSM 2638 / NCIMB 8403 / VKM B-1763) (Desulfovibrio salexigens).